Reading from the N-terminus, the 368-residue chain is Flap endonuclease 1 (368 aa).

The tract at residues 1 to 104 is N-domain; the sequence is MGIHDLSKVI…GELLKRGARR (104 aa). Mg(2+) is bound at residue aspartate 34. DNA contacts are provided by arginine 47 and arginine 70. Aspartate 86 serves as a coordination point for Mg(2+). The tract at residues 103 to 123 is disordered; it reads RRKEAQANLEEATEQGDTEQM. The interval 122-251 is I-domain; the sequence is QMEKFSRRLV…QKAYQLIKEH (130 aa). Mg(2+)-binding residues include glutamate 158, glutamate 160, aspartate 179, and aspartate 181. Residue glutamate 158 coordinates DNA. Glycine 229 and aspartate 231 together coordinate DNA. Aspartate 231 is a binding site for Mg(2+). An interaction with PCNA region spans residues 334–342; that stretch reads QQGRLDSFF.

Belongs to the XPG/RAD2 endonuclease family. FEN1 subfamily. As to quaternary structure, interacts with PCNA. Three molecules of FEN1 bind to one PCNA trimer with each molecule binding to one PCNA monomer. PCNA stimulates the nuclease activity without altering cleavage specificity. It depends on Mg(2+) as a cofactor. Phosphorylated. Phosphorylation upon DNA damage induces relocalization to the nuclear plasma.

Its subcellular location is the nucleus. The protein localises to the nucleolus. It localises to the nucleoplasm. It is found in the mitochondrion. Functionally, structure-specific nuclease with 5'-flap endonuclease and 5'-3' exonuclease activities involved in DNA replication and repair. During DNA replication, cleaves the 5'-overhanging flap structure that is generated by displacement synthesis when DNA polymerase encounters the 5'-end of a downstream Okazaki fragment. It enters the flap from the 5'-end and then tracks to cleave the flap base, leaving a nick for ligation. Also involved in the long patch base excision repair (LP-BER) pathway, by cleaving within the apurinic/apyrimidinic (AP) site-terminated flap. Acts as a genome stabilization factor that prevents flaps from equilibrating into structures that lead to duplications and deletions. Also possesses 5'-3' exonuclease activity on nicked or gapped double-stranded DNA, and exhibits RNase H activity. Also involved in replication and repair of rDNA and in repairing mitochondrial DNA. This is Flap endonuclease 1 from Monosiga brevicollis (Choanoflagellate).